A 352-amino-acid polypeptide reads, in one-letter code: Phosphoribosylformylglycinamidine cyclo-ligase (352 aa).

It belongs to the AIR synthase family.

Its subcellular location is the cytoplasm. The enzyme catalyses 2-formamido-N(1)-(5-O-phospho-beta-D-ribosyl)acetamidine + ATP = 5-amino-1-(5-phospho-beta-D-ribosyl)imidazole + ADP + phosphate + H(+). It participates in purine metabolism; IMP biosynthesis via de novo pathway; 5-amino-1-(5-phospho-D-ribosyl)imidazole from N(2)-formyl-N(1)-(5-phospho-D-ribosyl)glycinamide: step 2/2. This Pseudomonas syringae pv. tomato (strain ATCC BAA-871 / DC3000) protein is Phosphoribosylformylglycinamidine cyclo-ligase.